Consider the following 313-residue polypeptide: Cytochrome f (313 aa).

A signal peptide spans 1 to 30 (MRNWSFSKAALTVSLLALSWSPFGPAEVQA). Heme is bound by residues tyrosine 31, cysteine 51, cysteine 54, and histidine 55. A helical transmembrane segment spans residues 279 to 298 (VQGLIIFFAFVLIAQVFLVL).

The protein belongs to the cytochrome f family. In terms of assembly, the 4 large subunits of the cytochrome b6-f complex are cytochrome b6, subunit IV (17 kDa polypeptide, petD), cytochrome f and the Rieske protein, while the 4 small subunits are PetG, PetL, PetM and PetN. The complex functions as a dimer. Heme serves as cofactor.

It localises to the plastid. The protein localises to the chloroplast thylakoid membrane. In terms of biological role, component of the cytochrome b6-f complex, which mediates electron transfer between photosystem II (PSII) and photosystem I (PSI), cyclic electron flow around PSI, and state transitions. The chain is Cytochrome f from Nephroselmis olivacea (Green alga).